Consider the following 226-residue polypeptide: Transcriptional activator plp-1 (226 aa).

It belongs to the PUR DNA-binding protein family.

It is found in the nucleus. It localises to the chromosome. Functionally, probable transcription activator. Binds telomeric DNA containing repeats of the sequence, 5'-TTAGGC-3'. Binds to end-1 promoter, activating end-1 expression, which is required for endoderm specification during embryonic development. The sequence is that of Transcriptional activator plp-1 from Caenorhabditis elegans.